Reading from the N-terminus, the 214-residue chain is ATP phosphoribosyltransferase (214 aa).

Belongs to the ATP phosphoribosyltransferase family. Short subfamily. Heteromultimer composed of HisG and HisZ subunits.

The protein resides in the cytoplasm. The catalysed reaction is 1-(5-phospho-beta-D-ribosyl)-ATP + diphosphate = 5-phospho-alpha-D-ribose 1-diphosphate + ATP. The protein operates within amino-acid biosynthesis; L-histidine biosynthesis; L-histidine from 5-phospho-alpha-D-ribose 1-diphosphate: step 1/9. Catalyzes the condensation of ATP and 5-phosphoribose 1-diphosphate to form N'-(5'-phosphoribosyl)-ATP (PR-ATP). Has a crucial role in the pathway because the rate of histidine biosynthesis seems to be controlled primarily by regulation of HisG enzymatic activity. In Marinomonas sp. (strain MWYL1), this protein is ATP phosphoribosyltransferase.